A 311-amino-acid chain; its full sequence is Aspartate carbamoyltransferase catalytic subunit (311 aa).

Residues R58 and T59 each contribute to the carbamoyl phosphate site. Residue K86 coordinates L-aspartate. Positions 108, 136, and 139 each coordinate carbamoyl phosphate. Residues R169 and R223 each coordinate L-aspartate. 2 residues coordinate carbamoyl phosphate: G264 and P265.

This sequence belongs to the aspartate/ornithine carbamoyltransferase superfamily. ATCase family. Heterododecamer (2C3:3R2) of six catalytic PyrB chains organized as two trimers (C3), and six regulatory PyrI chains organized as three dimers (R2).

It carries out the reaction carbamoyl phosphate + L-aspartate = N-carbamoyl-L-aspartate + phosphate + H(+). It functions in the pathway pyrimidine metabolism; UMP biosynthesis via de novo pathway; (S)-dihydroorotate from bicarbonate: step 2/3. Its function is as follows. Catalyzes the condensation of carbamoyl phosphate and aspartate to form carbamoyl aspartate and inorganic phosphate, the committed step in the de novo pyrimidine nucleotide biosynthesis pathway. This chain is Aspartate carbamoyltransferase catalytic subunit, found in Desulfosudis oleivorans (strain DSM 6200 / JCM 39069 / Hxd3) (Desulfococcus oleovorans).